A 472-amino-acid chain; its full sequence is 3-isopropylmalate dehydratase large subunit (472 aa).

[4Fe-4S] cluster-binding residues include Cys353, Cys414, and Cys417.

It belongs to the aconitase/IPM isomerase family. LeuC type 1 subfamily. As to quaternary structure, heterodimer of LeuC and LeuD. The cofactor is [4Fe-4S] cluster.

It carries out the reaction (2R,3S)-3-isopropylmalate = (2S)-2-isopropylmalate. It participates in amino-acid biosynthesis; L-leucine biosynthesis; L-leucine from 3-methyl-2-oxobutanoate: step 2/4. Functionally, catalyzes the isomerization between 2-isopropylmalate and 3-isopropylmalate, via the formation of 2-isopropylmaleate. The chain is 3-isopropylmalate dehydratase large subunit from Acinetobacter baumannii (strain AB307-0294).